A 561-amino-acid polypeptide reads, in one-letter code: Urocanate hydratase (561 aa).

NAD(+) contacts are provided by residues 52–53 (GG), Q130, 176–178 (GMG), E196, R201, 242–243 (NA), 263–267 (QTSAH), 273–274 (YL), and Y322. Residue C410 is part of the active site. NAD(+) is bound at residue G492.

The protein belongs to the urocanase family. It depends on NAD(+) as a cofactor.

The protein localises to the cytoplasm. It catalyses the reaction 4-imidazolone-5-propanoate = trans-urocanate + H2O. It participates in amino-acid degradation; L-histidine degradation into L-glutamate; N-formimidoyl-L-glutamate from L-histidine: step 2/3. In terms of biological role, catalyzes the conversion of urocanate to 4-imidazolone-5-propionate. The protein is Urocanate hydratase of Salmonella gallinarum (strain 287/91 / NCTC 13346).